Reading from the N-terminus, the 314-residue chain is Probable manganese-dependent inorganic pyrophosphatase (314 aa).

Residues histidine 10, aspartate 14, aspartate 16, aspartate 80, histidine 102, and aspartate 154 each contribute to the Mn(2+) site.

The protein belongs to the PPase class C family. It depends on Mn(2+) as a cofactor.

It is found in the cytoplasm. The catalysed reaction is diphosphate + H2O = 2 phosphate + H(+). This Lactococcus lactis subsp. lactis (strain IL1403) (Streptococcus lactis) protein is Probable manganese-dependent inorganic pyrophosphatase (ppaC).